Here is a 434-residue protein sequence, read N- to C-terminus: Putative DD-carboxypeptidase TP_0574 (434 aa).

Residues 1–19 form the signal peptide; that stretch reads MKVKYALLSAGALQLLVVG. Residue cysteine 20 is the site of N-palmitoyl cysteine attachment. A lipid anchor (S-diacylglycerol cysteine) is attached at cysteine 20.

Probably a monomer; a non-lipidated construct (residues 22-434) is monomeric in solution but crystallizes as a homodimer. Requires Zn(2+) as cofactor. The N-terminus is blocked. Present as a doublet of low abundance 48 kDa and high abundance 47 kDa proteins. The longer form is probably due to readthrough of the stop codon; the extra amino acids at the C-terminus would be X-Lys-Arg-Gly-Val-Leu-Ser-Arg-Val-Ser, a peptide antibody against this sequence detects only the 48 kDa form.

It is found in the cell inner membrane. Functionally, a possible D,D-carboxypeptidase, that releases amino acids sequentially from a proteins C-terminus. Has zinc-dependent carboxypeptidase activity on synthetic depsipeptide substrates. May serve to decrease cross-linking of peptidoglycan, promoting the highly sinusous motility of this spirochaete. Overexpression of the whole protein in E.coli leads to aberrant cell morphology and extrusion of the cytoplasm, while overexpression of a construct with the first 62 resides of the protein fused to PhoA does have this effect, suggesting the whole protein, not the lipoprotein moiety, is toxic. Binds penicillin. Penicillin binding is covalent, does not require lipidation, and is zinc-dependent. While this protein has beta-lactamase activity in vitro, that is probably not its role in vivo, as T.pallidum is very sensitive to penicillin antibiotics. Its function is as follows. A pathogen-specific membrane antigen. Most abundant of the membrane lipoproteins, only found in pathogenic treponemes, suggesting that it is an important structural moiety in the cell envelope of virulent treponemal subspecies. A lipopeptide corresponding to the first 6 mature residues induces host (human and mouse) cytokine release by monocyte cell lines via TLR2 and CD14; nonlipidated protein does not stimulate host cells. Stimulates host (human) dendritic cell maturation to become MHC class II-positive antigen presenting cells via TLR2, which depends on lipidation; nonlipidated protein does not stimulate maturation. In Treponema pallidum (strain Nichols), this protein is Putative DD-carboxypeptidase TP_0574.